The chain runs to 155 residues: Transcriptional repressor NrdR (155 aa).

A zinc finger spans residues cysteine 3–cysteine 34. Positions leucine 49–aspartate 139 constitute an ATP-cone domain.

It belongs to the NrdR family. Requires Zn(2+) as cofactor.

Its function is as follows. Negatively regulates transcription of bacterial ribonucleotide reductase nrd genes and operons by binding to NrdR-boxes. The polypeptide is Transcriptional repressor NrdR (Cereibacter sphaeroides (strain ATCC 17029 / ATH 2.4.9) (Rhodobacter sphaeroides)).